The primary structure comprises 237 residues: tRNA(His) guanylyltransferase (237 aa).

Mg(2+)-binding residues include Asp29, Gly30, and Asp77. GTP contacts are provided by residues 29–34 and 76–77; these read DGKHFH and SD.

Belongs to the tRNA(His) guanylyltransferase family. The cofactor is Mg(2+).

The catalysed reaction is a 5'-end ribonucleotide-tRNA(His) + GTP + ATP + H2O = a 5'-end phospho-guanosine-ribonucleotide-tRNA(His) + AMP + 2 diphosphate + H(+). Functionally, adds a GMP to the 5'-end of tRNA(His) after transcription and RNase P cleavage. The protein is tRNA(His) guanylyltransferase (THG1) of Eremothecium gossypii (strain ATCC 10895 / CBS 109.51 / FGSC 9923 / NRRL Y-1056) (Yeast).